The chain runs to 230 residues: Sodium channel modifier 1 (230 aa).

Phosphoserine is present on S2. A Bipartite nuclear localization signal motif is present at residues 4 to 20 (KREGDDWSQLNVLKKRR). A Matrin-type zinc finger spans residues 42-74 (FACAICPHRPVLDTLAMLTAHRAGKKHLSSLQL). A Glycyl lysine isopeptide (Lys-Gly) (interchain with G-Cter in SUMO2) cross-link involves residue K67. Disordered regions lie at residues 76-106 (YGKKQPGKERKQNPKHQNELRREETKAEAPL), 129-186 (RRKY…SPTR), and 200-230 (GWIPDGRGRWVKDENVEFDSDEEEPPDLPLD). Residues 81–102 (PGKERKQNPKHQNELRREETKA) are compositionally biased toward basic and acidic residues. S144 carries the phosphoserine modification. The segment covering 164–174 (PAAGPQAEESA) has biased composition (low complexity). S183 is modified (phosphoserine). The required for interaction with LUC7L2 stretch occupies residues 188–230 (RALDHYLTLRSSGWIPDGRGRWVKDENVEFDSDEEEPPDLPLD). Over residues 205–214 (GRGRWVKDEN) the composition is skewed to basic and acidic residues. Residues 215 to 230 (VEFDSDEEEPPDLPLD) show a composition bias toward acidic residues. S219 is subject to Phosphoserine.

As to quaternary structure, component of the minor spliceosome, which splices U12-type introns. Within this complex, interacts with RNF113A, as well as with SF3B1/SF3b155, SF3B2/SF3b145, SF3B3/SF3b130 and CDC5L. May interact with LUC7L2 and SNRNP70.

Its subcellular location is the nucleus. The protein resides in the nucleoplasm. It is found in the nucleus speckle. As a component of the minor spliceosome, involved in the splicing of U12-type introns in pre-mRNAs. Plays a role in the regulation of primary cilia length and Hedgehog signaling. The sequence is that of Sodium channel modifier 1 (SCNM1) from Homo sapiens (Human).